Consider the following 772-residue polypeptide: Endoplasmic reticulum membrane sensor NFE2L1 (772 aa).

Residues 7–24 traverse the membrane as a helical; Signal-anchor for type II membrane protein segment; sequence YFTEGLIQFTILLSLIGV. The tract at residues 191–199 is cholesterol recognition/amino acid consensus (CRAC) region; it reads IFDYSHRQK. The segment covering 198 to 216 has biased composition (basic and acidic residues); that stretch reads QKESEVDKELSDGRERGDG. A disordered region spans residues 198–223; the sequence is QKESEVDKELSDGRERGDGWRSAGGQ. N-linked (GlcNAc...) asparagine glycans are attached at residues Asn-332, Asn-340, Asn-362, Asn-402, Asn-407, Asn-414, Asn-425, and Asn-429. A disordered region spans residues 472 to 531; the sequence is EEEFDSDSGLSLDSGHSPASLSSSEASSSSSSSSSSSSSSSSSSSSFSEEGAVGYSSDSE. Over residues 478 to 519 the composition is skewed to low complexity; sequence DSGLSLDSGHSPASLSSSEASSSSSSSSSSSSSSSSSSSSFS. Residue Asn-574 is glycosylated (N-linked (GlcNAc...) asparagine). The segment at 581-613 is disordered; sequence PGTLDPEEPKLPSVGKKSSKEKPSEFLDKQMSR. Residues 598–613 are compositionally biased toward basic and acidic residues; it reads SSKEKPSEFLDKQMSR. The region spanning 654–717 is the bZIP domain; the sequence is LIRDIRRRGK…RQMKQKVQNL (64 aa). Residues 656–675 form a basic motif region; the sequence is RDIRRRGKNKMAAQNCRKRK. Positions 682 to 696 are leucine-zipper; that stretch reads LERDVEDLQRDKSKL. The short motif at 761–768 is the Nuclear localization signal element; it reads RRQERKQK.

This sequence belongs to the bZIP family. CNC subfamily. In terms of assembly, interacts (via the bZIP domain) with small MAF protein (MAFF, MAFG or MAFK); required for binding to antioxidant response elements (AREs) on DNA. In terms of processing, cleaved at Leu-104 following retrotranslocation, releasing the protein from the endoplasmic reticulum membrane and forming the transcription factor NRF1 that translocates into the nucleus.

The protein localises to the endoplasmic reticulum membrane. It localises to the nucleus. In terms of biological role, endoplasmic reticulum membrane sensor that translocates into the nucleus in response to various stresses to act as a transcription factor. Constitutes a precursor of the transcription factor NRF1. Able to detect various cellular stresses, such as cholesterol excess, oxidative stress or proteasome inhibition. In response to stress, it is released from the endoplasmic reticulum membrane following cleavage and translocates into the nucleus to form the transcription factor NRF1. Acts as a key sensor of cholesterol excess: in excess cholesterol conditions, the endoplasmic reticulum membrane form of the protein directly binds cholesterol via its CRAC motif, preventing cleavage and release of the transcription factor NRF1, thereby allowing expression of genes promoting cholesterol removal. Involved in proteasome homeostasis: in response to proteasome inhibition, it is released from the endoplasmic reticulum membrane, translocates to the nucleus and activates expression of genes encoding proteasome subunits. Functionally, CNC-type bZIP family transcription factor that translocates to the nucleus and regulates expression of target genes in response to various stresses. Heterodimerizes with small-Maf proteins (MAFF, MAFG or MAFK) and binds DNA motifs including the antioxidant response elements (AREs), which regulate expression of genes involved in oxidative stress response. Activates or represses expression of target genes, depending on the context. Plays a key role in cholesterol homeostasis by acting as a sensor of cholesterol excess: in low cholesterol conditions, translocates into the nucleus and represses expression of genes involved in defense against cholesterol excess. In excess cholesterol conditions, the endoplasmic reticulum membrane form of the protein directly binds cholesterol via its CRAC motif, preventing cleavage and release of the transcription factor NRF1, thereby allowing expression of genes promoting cholesterol removal. Critical for redox balance in response to oxidative stress: acts by binding the AREs motifs on promoters and mediating activation of oxidative stress response genes. Involved in proteasome homeostasis: in response to proteasome inhibition, mediates the 'bounce-back' of proteasome subunits by translocating into the nucleus and activating expression of genes encoding proteasome subunits. The polypeptide is Endoplasmic reticulum membrane sensor NFE2L1 (Gallus gallus (Chicken)).